The primary structure comprises 256 residues: Metallo-beta-lactamase type 2 (256 aa).

An N-terminal signal peptide occupies residues 1 to 29 (MKNTLLKLGVCVSLLGITPFVSTISSVQA). Positions 115, 117, 119, 178, and 197 each coordinate Zn(2+). The substrate site is built by Lys200 and Asn209. His239 lines the Zn(2+) pocket.

Belongs to the metallo-beta-lactamase superfamily. Class-B beta-lactamase family. Monomer. Requires Zn(2+) as cofactor.

It localises to the periplasm. It catalyses the reaction a beta-lactam + H2O = a substituted beta-amino acid. Inhibited by chelating agents such as EDTA. Confers resistance to the different beta-lactams antibiotics (penicillin, cephalosporin and carbapenem) via the hydrolysis of the beta-lactam ring. Benzylpenicillin is a better substrate than cephalosporin C and ampicillin. This chain is Metallo-beta-lactamase type 2, found in Bacillus cereus.